Reading from the N-terminus, the 239-residue chain is Purine nucleoside phosphorylase DeoD-type (239 aa).

His-5 contacts a purine D-ribonucleoside. Phosphate contacts are provided by residues Gly-21, Arg-25, Arg-44, and 89-92 (RVGS). A purine D-ribonucleoside contacts are provided by residues 180–182 (EME) and 204–205 (SD). The active-site Proton donor is the Asp-205.

Belongs to the PNP/UDP phosphorylase family. Homohexamer; trimer of homodimers.

It catalyses the reaction a purine D-ribonucleoside + phosphate = a purine nucleobase + alpha-D-ribose 1-phosphate. The catalysed reaction is a purine 2'-deoxy-D-ribonucleoside + phosphate = a purine nucleobase + 2-deoxy-alpha-D-ribose 1-phosphate. Functionally, catalyzes the reversible phosphorolytic breakdown of the N-glycosidic bond in the beta-(deoxy)ribonucleoside molecules, with the formation of the corresponding free purine bases and pentose-1-phosphate. The chain is Purine nucleoside phosphorylase DeoD-type from Klebsiella pneumoniae.